We begin with the raw amino-acid sequence, 294 residues long: TBC1 domain family member 7 (294 aa).

In terms of domain architecture, Rab-GAP TBC spans 50-232; the sequence is PLPSMYRIHV…RVWDKVISGS (183 aa).

Component of the TSC-TBC complex (also named Rhebulator complex), composed of 2 molecules of TSC1, 2 molecules of TSC2 and 1 molecule of TBC1D7.

The protein localises to the lysosome membrane. The protein resides in the cytoplasmic vesicle. It is found in the cytoplasm. Its subcellular location is the cytosol. Functionally, non-catalytic component of the TSC-TBC complex, a multiprotein complex that acts as a negative regulator of the canonical mTORC1 complex, an evolutionarily conserved central nutrient sensor that stimulates anabolic reactions and macromolecule biosynthesis to promote cellular biomass generation and growth. The TSC-TBC complex acts as a GTPase-activating protein (GAP) for the small GTPase RHEB, a direct activator of the protein kinase activity of mTORC1. In absence of nutrients, the TSC-TBC complex inhibits mTORC1, thereby preventing phosphorylation of ribosomal protein S6 kinase (RPS6KB1 and RPS6KB2) and EIF4EBP1 (4E-BP1) by the mTORC1 signaling. The TSC-TBC complex is inactivated in response to nutrients, relieving inhibition of mTORC1. The polypeptide is TBC1 domain family member 7 (tbc1d7) (Danio rerio (Zebrafish)).